A 118-amino-acid chain; its full sequence is Small ribosomal subunit protein eS24 (118 aa).

This sequence belongs to the eukaryotic ribosomal protein eS24 family.

The polypeptide is Small ribosomal subunit protein eS24 (Sulfolobus acidocaldarius (strain ATCC 33909 / DSM 639 / JCM 8929 / NBRC 15157 / NCIMB 11770)).